Reading from the N-terminus, the 369-residue chain is Peptide chain release factor 2 (369 aa).

Gln249 carries the N5-methylglutamine modification.

It belongs to the prokaryotic/mitochondrial release factor family. Post-translationally, methylated by PrmC. Methylation increases the termination efficiency of RF2.

The protein localises to the cytoplasm. Its function is as follows. Peptide chain release factor 2 directs the termination of translation in response to the peptide chain termination codons UGA and UAA. This chain is Peptide chain release factor 2, found in Corynebacterium diphtheriae (strain ATCC 700971 / NCTC 13129 / Biotype gravis).